The sequence spans 490 residues: Nuclear distribution protein PAC1 (490 aa).

Residues 65–96 are a coiled coil; sequence STVLRLQKKIIDLENEIHNLTNIINTTNSETN. WD repeat units lie at residues 118 to 157, 163 to 204, 205 to 245, 251 to 290, 293 to 327, 328 to 367, 388 to 427, and 436 to 487; these read QCEN…NTIP, AHTR…RTLN, GHEH…CLKS, EWCR…GVAM, GHTH…FPSI, PSEL…LIPH, GHSS…ETGS, and GHEG…NSIK.

It belongs to the WD repeat LIS1/nudF family. Self-associates. Interacts with NDL1 and dynein.

Its subcellular location is the cytoplasm. The protein resides in the cytoskeleton. It is found in the spindle pole. Positively regulates the activity of the minus-end directed microtubule motor protein dynein. Plays a central role in positioning the mitotic spindle at the bud neck during cell division. Targets cytoplasmic dynein to microtubule plus ends, thereby promoting dynein-mediated microtubule sliding along the bud cortex and consequently the movement of the mitotic spindle to the bud neck. This is Nuclear distribution protein PAC1 from Candida tropicalis (strain ATCC MYA-3404 / T1) (Yeast).